The sequence spans 281 residues: Bis(5'-nucleosyl)-tetraphosphatase, symmetrical (281 aa).

It belongs to the Ap4A hydrolase family.

The catalysed reaction is P(1),P(4)-bis(5'-adenosyl) tetraphosphate + H2O = 2 ADP + 2 H(+). Functionally, hydrolyzes diadenosine 5',5'''-P1,P4-tetraphosphate to yield ADP. This is Bis(5'-nucleosyl)-tetraphosphatase, symmetrical from Acidovorax ebreus (strain TPSY) (Diaphorobacter sp. (strain TPSY)).